Here is a 687-residue protein sequence, read N- to C-terminus: MSARYPLLNRELGILGFNERVLAQAADPQVPLLERLRFICITSSNLDEFFEVRMAGLQEQIRDNPGALTPDGMSLQHAYDLVVERAQRLVHRQYTMLHETVLPALEQEGIYFHASDTWNDAQLEWARGYFLDELLPVLTPIGLDPAHPFPRVLNKSLNFVVELEGRDAFGRQAVMGIVQAPRALPRVVRMPQSLSGFEHGFVLLSSFMQRFVGELFPQLVVKSCNQFRITRNSELFVDEDEITNLRVALQGELPARHLGNAVRLEVSADTPAHIVRRLLDESSLGDKDCYRVAGSVNLVRLMQIPDLVDRPDLKFAPFVASIPPAIANAPTMFDAIDAGDILLHHPYESFQPVLELLQQAAKDPSVVAIKQTIYRTGTDSPLMDALMEAARNGKEVTVVVELLARFDEETNINWASQLEAVGAHVVYGVVGHKCHAKMMLIVRRVVEGGKATLRRYVHLGTGNYHPRTARLYTDFGLMTADQKICEDVHHVFQQLTGIGGELTLHELWQSPFTLHPRIIDSIRAEIDNARAGKRARIVAKMNALLEPSVIAALYEASQAGVKVDLIVRGVCALKPGVPGLSENITVRSIVGRFLEHHRIYYFHAGGAEEVYLSSADWMDRNLFRRVEVAFPIRARKLKRRVIAEGLSVCLGDNQSAWLMQSDGHYRRRRAGKTVRNAQLGLLAKFCS.

Residue Asn-45 participates in ATP binding. Residues Arg-375 and Arg-405 each coordinate Mg(2+). Residue His-435 is the Phosphohistidine intermediate of the active site. Residues Tyr-472, Arg-568, and His-596 each coordinate ATP.

It belongs to the polyphosphate kinase 1 (PPK1) family. Mg(2+) is required as a cofactor. Post-translationally, an intermediate of this reaction is the autophosphorylated ppk in which a phosphate is covalently linked to a histidine residue through a N-P bond.

It catalyses the reaction [phosphate](n) + ATP = [phosphate](n+1) + ADP. In terms of biological role, catalyzes the reversible transfer of the terminal phosphate of ATP to form a long-chain polyphosphate (polyP). In Burkholderia vietnamiensis (strain G4 / LMG 22486) (Burkholderia cepacia (strain R1808)), this protein is Polyphosphate kinase.